Reading from the N-terminus, the 392-residue chain is Formate-dependent phosphoribosylglycinamide formyltransferase (392 aa).

Residues 22–23 (EL) and Glu82 each bind N(1)-(5-phospho-beta-D-ribosyl)glycinamide. Residues Arg114, Lys155, 160 to 165 (SSGHGQ), 195 to 198 (EGFI), and Glu203 each bind ATP. The ATP-grasp domain occupies 119–307 (RLAAEELGLK…QFALHARAIL (189 aa)). Residues Glu266 and Glu278 each coordinate Mg(2+). Residues Asp285, Lys355, and 362–363 (RR) each bind N(1)-(5-phospho-beta-D-ribosyl)glycinamide.

It belongs to the PurK/PurT family. Homodimer.

Its subcellular location is the cell inner membrane. The catalysed reaction is N(1)-(5-phospho-beta-D-ribosyl)glycinamide + formate + ATP = N(2)-formyl-N(1)-(5-phospho-beta-D-ribosyl)glycinamide + ADP + phosphate + H(+). It functions in the pathway purine metabolism; IMP biosynthesis via de novo pathway; N(2)-formyl-N(1)-(5-phospho-D-ribosyl)glycinamide from N(1)-(5-phospho-D-ribosyl)glycinamide (formate route): step 1/1. Its function is as follows. Involved in the de novo purine biosynthesis. Catalyzes the transfer of formate to 5-phospho-ribosyl-glycinamide (GAR), producing 5-phospho-ribosyl-N-formylglycinamide (FGAR). Formate is provided by PurU via hydrolysis of 10-formyl-tetrahydrofolate. The protein is Formate-dependent phosphoribosylglycinamide formyltransferase of Mannheimia haemolytica (Pasteurella haemolytica).